A 396-amino-acid polypeptide reads, in one-letter code: 3-amino-4-hydroxybenzoic acid synthase (396 aa).

The tract at residues 1 to 29 (MSSSPSPSPSSSSSSSASSSASSSPSSSS) is disordered.

The protein belongs to the archaeal-type DHQ synthase family. GriH subfamily. In terms of assembly, monomer. Mn(2+) is required as a cofactor.

It catalyses the reaction 2-amino-4,5-dihydroxy-6-oxo-7-(phosphooxy)heptanoate = 3-amino-4-hydroxybenzoate + phosphate + 2 H2O + H(+). Functionally, catalyzes the cyclization of 2-amino-4,5-dihydroxy-6-one-heptanoic acid-7-phosphate to yield 3-amino-4-hydroxybenzoic acid (3,4-AHBA). This Streptomyces griseus subsp. griseus (strain JCM 4626 / CBS 651.72 / NBRC 13350 / KCC S-0626 / ISP 5235) protein is 3-amino-4-hydroxybenzoic acid synthase (griH).